The chain runs to 548 residues: MPALRPLLPLLLLLRLTSGAGLLPGLGSHPGVCPNQLSPNLWVDAQSTCERECSRDQDCAAAEKCCINVCGLHSCVAARFPGSPAAPTTAASCEGFVCPQQGSDCDIWDGQPVCRCRDRCEKEPSFTCASDGLTYYNRCYMDAEACLRGLHLHIVPCKHVLSWPPSSPGPPETTARPTPGAAPVPPALYSSPSPQAVQVGGTASLHCDVSGRPPPAVTWEKQSHQRENLIMRPDQMYGNVVVTSIGQLVLYNARPEDAGLYTCTARNAAGLLRADFPLSVVQREPARDAAPSIPAPAECLPDVQACTGPTSPHLVLWHYDPQRGGCMTFPARGCDGAARGFETYEACQQACARGPGDACVLPAVQGPCRGWEPRWAYSPLLQQCHPFVYGGCEGNGNNFHSRESCEDACPVPRTPPCRACRLRSKLALSLCRSDFAIVGRLTEVLEEPEAAGGIARVALEDVLKDDKMGLKFLGTKYLEVTLSGMDWACPCPNMTAGDGPLVIMGEVRDGVAVLDAGSYVRAASEKRVKKILELLEKQACELLNRFQD.

The first 19 residues, 1–19, serve as a signal peptide directing secretion; it reads MPALRPLLPLLLLLRLTSG. The region spanning 26 to 79 is the WAP domain; the sequence is LGSHPGVCPNQLSPNLWVDAQSTCERECSRDQDCAAAEKCCINVCGLHSCVAAR. 7 disulfides stabilise this stretch: Cys-33–Cys-66, Cys-49–Cys-70, Cys-53–Cys-65, Cys-59–Cys-75, Cys-116–Cys-146, Cys-120–Cys-139, and Cys-128–Cys-157. Residues 108-159 form the Kazal-like domain; the sequence is WDGQPVCRCRDRCEKEPSFTCASDGLTYYNRCYMDAEACLRGLHLHIVPCKH. A disordered region spans residues 164–184; sequence PPSSPGPPETTARPTPGAAPV. The region spanning 186–279 is the Ig-like C2-type domain; sequence PALYSSPSPQ…GLLRADFPLS (94 aa). Disulfide bonds link Cys-207/Cys-263, Cys-299/Cys-351, Cys-306/Cys-334, Cys-326/Cys-347, Cys-359/Cys-409, Cys-368/Cys-392, Cys-384/Cys-405, Cys-417/Cys-489, Cys-420/Cys-491, and Cys-431/Cys-540. 2 BPTI/Kunitz inhibitor domains span residues 299 to 351 and 359 to 409; these read CLPD…QQAC and CVLP…EDAC. Residues 409–540 enclose the NTR domain; the sequence is CPVPRTPPCR…ILELLEKQAC (132 aa). An N-linked (GlcNAc...) asparagine glycan is attached at Asn-493.

It belongs to the WFIKKN family. As to expression, expressed in pancreas, kidney, liver, placenta, and lung.

The protein localises to the secreted. Functionally, protease-inhibitor that contains multiple distinct protease inhibitor domains. Probably has serine protease- and metalloprotease-inhibitor activity. This is WAP, Kazal, immunoglobulin, Kunitz and NTR domain-containing protein 1 (WFIKKN1) from Homo sapiens (Human).